Reading from the N-terminus, the 981-residue chain is Ubiquitin carboxyl-terminal hydrolase 15 (981 aa).

N-acetylalanine is present on A2. Residues 2–223 are mediates interaction with SART3; it reads AEGGAADLDT…KNEDGTWPRG (222 aa). A DUSP domain is found at 7–118; it reads ADLDTQRSDI…GQEPIARKVV (112 aa). The interval 216–237 is disordered; sequence EDGTWPRGPSTPKSPGASNFST. T226 carries the phosphothreonine modification. The span at 226 to 237 shows a compositional bias: polar residues; the sequence is TPKSPGASNFST. A phosphoserine mark is found at S229 and S242. A USP domain is found at 289-933; sequence CGLSNLGNTC…AAYVLFYQRQ (645 aa). Catalysis depends on C298, which acts as the Nucleophile. Phosphothreonine is present on T602. The tract at residues 633–694 is disordered; sequence CCEDQNINGN…GGDNDSENGL (62 aa). Acidic residues predominate over residues 656–673; the sequence is METDEPDDESSQDQELPS. H891 acts as the Proton acceptor in catalysis. Residues 952 to 981 are disordered; it reads SAATGIPLESDEDSNDNDNDLENENCMHTN. A compositionally biased stretch (acidic residues) spans 960-974; the sequence is ESDEDSNDNDNDLEN. Phosphoserine occurs at positions 961 and 965.

The protein belongs to the peptidase C19 family. A homodimer structure has been reported; however it is unclear whether the protein form a homodimer in vivo. Identified in a complex with the COP9 signalosome complex (CSN). Interacts with SMAD1, SMAD2 and SMAD3; the interaction is direct. Forms a complex with SMURF2 and SMAD7. Interacts with TGFBR1. Interacts with SART3; the interaction is direct. May interact with RNF20 and RNF40. May interact with PRKN. Interacts with INCA1. Post-translationally, phosphorylated. Phosphorylation protects against ubiquitination and subsequent degradation by the proteasome. Ubiquitinated, leading to degradation by the proteasome. In terms of tissue distribution, widely expressed with highest levels in the brain and spleen, and lowest levels in the muscles (at protein level). In the midbrain, strong expression in neurons including the dopaminergic neurons (at protein level). Widely expressed with highest levels in testis, heart and liver.

The protein localises to the cytoplasm. Its subcellular location is the nucleus. It is found in the mitochondrion. The enzyme catalyses Thiol-dependent hydrolysis of ester, thioester, amide, peptide and isopeptide bonds formed by the C-terminal Gly of ubiquitin (a 76-residue protein attached to proteins as an intracellular targeting signal).. In terms of biological role, hydrolase that removes conjugated ubiquitin from target proteins and regulates various pathways such as the TGF-beta receptor signaling, NF-kappa-B and RNF41/NRDP1-PRKN pathways. Acts as a key regulator of TGF-beta receptor signaling pathway, but the precise mechanism is still unclear: according to a report, acts by promoting deubiquitination of monoubiquitinated R-SMADs (SMAD1, SMAD2 and/or SMAD3), thereby alleviating inhibition of R-SMADs and promoting activation of TGF-beta target genes. According to another reports, regulates the TGF-beta receptor signaling pathway by mediating deubiquitination and stabilization of TGFBR1, leading to an enhanced TGF-beta signal. Able to mediate deubiquitination of monoubiquitinated substrates, 'Lys-27'-, 'Lys-48'- and 'Lys-63'-linked polyubiquitin chains. May also regulate gene expression and/or DNA repair through the deubiquitination of histone H2B. Acts as an inhibitor of mitophagy by counteracting the action of parkin (PRKN): hydrolyzes cleavage of 'Lys-48'- and 'Lys-63'-linked polyubiquitin chains attached by parkin on target proteins such as MFN2, thereby reducing parkin's ability to drive mitophagy. Acts as an associated component of COP9 signalosome complex (CSN) and regulates different pathways via this association: regulates NF-kappa-B by mediating deubiquitination of NFKBIA and deubiquitinates substrates bound to VCP. Involved in endosome organization by mediating deubiquitination of SQSTM1: ubiquitinated SQSTM1 forms a molecular bridge that restrains cognate vesicles in the perinuclear region and its deubiquitination releases target vesicles for fast transport into the cell periphery. Acts as a negative regulator of antifungal immunity by mediating 'Lys-27'-linked deubiquitination of CARD9, thereby inactivating CARD9. The protein is Ubiquitin carboxyl-terminal hydrolase 15 (Usp15) of Mus musculus (Mouse).